The sequence spans 621 residues: 1-deoxy-D-xylulose-5-phosphate synthase (621 aa).

Thiamine diphosphate is bound by residues H80 and 121–123; that span reads GHS. Mg(2+) is bound at residue D152. Thiamine diphosphate is bound by residues 153–154, N181, Y288, and E370; that span reads GA. N181 contacts Mg(2+).

Belongs to the transketolase family. DXPS subfamily. As to quaternary structure, homodimer. Requires Mg(2+) as cofactor. The cofactor is thiamine diphosphate.

It catalyses the reaction D-glyceraldehyde 3-phosphate + pyruvate + H(+) = 1-deoxy-D-xylulose 5-phosphate + CO2. Its pathway is metabolic intermediate biosynthesis; 1-deoxy-D-xylulose 5-phosphate biosynthesis; 1-deoxy-D-xylulose 5-phosphate from D-glyceraldehyde 3-phosphate and pyruvate: step 1/1. Its function is as follows. Catalyzes the acyloin condensation reaction between C atoms 2 and 3 of pyruvate and glyceraldehyde 3-phosphate to yield 1-deoxy-D-xylulose-5-phosphate (DXP). This Aeromonas hydrophila subsp. hydrophila (strain ATCC 7966 / DSM 30187 / BCRC 13018 / CCUG 14551 / JCM 1027 / KCTC 2358 / NCIMB 9240 / NCTC 8049) protein is 1-deoxy-D-xylulose-5-phosphate synthase.